A 118-amino-acid polypeptide reads, in one-letter code: Ribonuclease P protein component (118 aa).

Belongs to the RnpA family. In terms of assembly, consists of a catalytic RNA component (M1 or rnpB) and a protein subunit.

The catalysed reaction is Endonucleolytic cleavage of RNA, removing 5'-extranucleotides from tRNA precursor.. Its function is as follows. RNaseP catalyzes the removal of the 5'-leader sequence from pre-tRNA to produce the mature 5'-terminus. It can also cleave other RNA substrates such as 4.5S RNA. The protein component plays an auxiliary but essential role in vivo by binding to the 5'-leader sequence and broadening the substrate specificity of the ribozyme. The sequence is that of Ribonuclease P protein component from Shewanella sp. (strain ANA-3).